The sequence spans 278 residues: MLDQTLEPLRAVIARHGLSADKRLGQNFLLDSQLLDRIARVPGDLTQKTVYEVGPGPGGLTRALLKAGAKVTAVERDRRCLPALAELSAHFPDQLQVISGDAMEIDEAAVLGEHVHIVANLPYNVGTALLIRWLTAKTWQPWWSSLTLMFQKEVAERITAKVGTPHYGRLSVLAQWRSEAKLSFPVHRSAFVPPPKVMSAVVHLTPKDQPEGLSLGTLEKITAAAFNQRRKMLRQSLKNIEHMMEALELAGIDATRRPETVSVAEFIAIGRHWEKLSA.

6 residues coordinate S-adenosyl-L-methionine: N27, L29, G54, E75, D101, and N120.

This sequence belongs to the class I-like SAM-binding methyltransferase superfamily. rRNA adenine N(6)-methyltransferase family. RsmA subfamily.

The protein localises to the cytoplasm. It catalyses the reaction adenosine(1518)/adenosine(1519) in 16S rRNA + 4 S-adenosyl-L-methionine = N(6)-dimethyladenosine(1518)/N(6)-dimethyladenosine(1519) in 16S rRNA + 4 S-adenosyl-L-homocysteine + 4 H(+). Specifically dimethylates two adjacent adenosines (A1518 and A1519) in the loop of a conserved hairpin near the 3'-end of 16S rRNA in the 30S particle. May play a critical role in biogenesis of 30S subunits. This chain is Ribosomal RNA small subunit methyltransferase A, found in Zymomonas mobilis subsp. mobilis (strain ATCC 31821 / ZM4 / CP4).